Consider the following 285-residue polypeptide: 4-diphosphocytidyl-2-C-methyl-D-erythritol kinase (285 aa).

Residue Lys11 is part of the active site. Pro95–Ala105 provides a ligand contact to ATP. Asp137 is a catalytic residue.

This sequence belongs to the GHMP kinase family. IspE subfamily.

It catalyses the reaction 4-CDP-2-C-methyl-D-erythritol + ATP = 4-CDP-2-C-methyl-D-erythritol 2-phosphate + ADP + H(+). It functions in the pathway isoprenoid biosynthesis; isopentenyl diphosphate biosynthesis via DXP pathway; isopentenyl diphosphate from 1-deoxy-D-xylulose 5-phosphate: step 3/6. Functionally, catalyzes the phosphorylation of the position 2 hydroxy group of 4-diphosphocytidyl-2C-methyl-D-erythritol. The polypeptide is 4-diphosphocytidyl-2-C-methyl-D-erythritol kinase (Paramagnetospirillum magneticum (strain ATCC 700264 / AMB-1) (Magnetospirillum magneticum)).